Here is a 464-residue protein sequence, read N- to C-terminus: Probable glycosyltransferase Saci_1499 (464 aa).

6 helical membrane passes run 6-26 (IFLN…QIIL), 300-320 (LIIY…STLL), 337-357 (ALLF…SLAL), 373-393 (LTAF…KGLL), 416-436 (IIAI…LYIY), and 439-459 (YYVT…TMLL).

The protein belongs to the glycosyltransferase 2 family.

Its subcellular location is the cell membrane. Its function is as follows. Probably part of a 4-gene DNA damage response locus in which the upstream ups system, in combination with this downstream locus, functions in homologous recombination to rescue Sulfolobales from DNA-damaging threats. This chain is Probable glycosyltransferase Saci_1499, found in Sulfolobus acidocaldarius (strain ATCC 33909 / DSM 639 / JCM 8929 / NBRC 15157 / NCIMB 11770).